A 302-amino-acid chain; its full sequence is Ethylmalonyl-CoA decarboxylase (302 aa).

It belongs to the enoyl-CoA hydratase/isomerase family.

It localises to the cytoplasm. Its subcellular location is the cytosol. The catalysed reaction is (2S)-ethylmalonyl-CoA + H(+) = butanoyl-CoA + CO2. It carries out the reaction (S)-methylmalonyl-CoA + H(+) = propanoyl-CoA + CO2. It catalyses the reaction (2R)-ethylmalonyl-CoA + H(+) = butanoyl-CoA + CO2. In terms of biological role, decarboxylates ethylmalonyl-CoA, a potentially toxic metabolite, to form butyryl-CoA, suggesting it might be involved in metabolite proofreading. Acts preferentially on (S)-ethylmalonyl-CoA but also has some activity on the (R)-isomer. Also has methylmalonyl-CoA decarboxylase activity at lower level. In Danio rerio (Zebrafish), this protein is Ethylmalonyl-CoA decarboxylase (echdc1).